The primary structure comprises 372 residues: Phenylalanine--tRNA ligase alpha subunit (372 aa).

Glutamate 276 contacts Mg(2+).

Belongs to the class-II aminoacyl-tRNA synthetase family. Phe-tRNA synthetase alpha subunit type 1 subfamily. As to quaternary structure, tetramer of two alpha and two beta subunits. Mg(2+) is required as a cofactor.

It is found in the cytoplasm. The enzyme catalyses tRNA(Phe) + L-phenylalanine + ATP = L-phenylalanyl-tRNA(Phe) + AMP + diphosphate + H(+). The chain is Phenylalanine--tRNA ligase alpha subunit from Thermobifida fusca (strain YX).